We begin with the raw amino-acid sequence, 249 residues long: Probable phosphatase VV2_1469 (249 aa).

The Zn(2+) site is built by histidine 8, histidine 10, histidine 16, histidine 41, glutamate 74, histidine 102, histidine 132, aspartate 194, and histidine 196.

It belongs to the PHP family. Requires Zn(2+) as cofactor.

This is Probable phosphatase VV2_1469 from Vibrio vulnificus (strain CMCP6).